Here is a 71-residue protein sequence, read N- to C-terminus: Conotoxin ba5b (71 aa).

The signal sequence occupies residues 1–19; the sequence is MLCLPVFITLLLLVSPSAA. The propeptide occupies 20 to 52; the sequence is LPVESELQRDLTQDSPKDFRIREPLLLSKMFDR. 2 cysteine pairs are disulfide-bonded: C54/C63 and C55/C64. C64 carries the post-translational modification Cysteine amide. A propeptide spanning residues 66 to 71 is cleaved from the precursor; that stretch reads RYQRGS.

Belongs to the conotoxin T superfamily. Expressed by the venom duct.

Its subcellular location is the secreted. This chain is Conotoxin ba5b, found in Conus bayani (Bayan's cone).